The chain runs to 429 residues: Enolase (429 aa).

(2R)-2-phosphoglycerate is bound at residue Gln163. Catalysis depends on Glu205, which acts as the Proton donor. The Mg(2+) site is built by Asp242, Glu287, and Asp314. Residues Lys339, Arg368, Ser369, and Lys390 each coordinate (2R)-2-phosphoglycerate. Lys339 (proton acceptor) is an active-site residue.

This sequence belongs to the enolase family. It depends on Mg(2+) as a cofactor.

It is found in the cytoplasm. The protein localises to the secreted. The protein resides in the cell surface. It carries out the reaction (2R)-2-phosphoglycerate = phosphoenolpyruvate + H2O. It participates in carbohydrate degradation; glycolysis; pyruvate from D-glyceraldehyde 3-phosphate: step 4/5. In terms of biological role, catalyzes the reversible conversion of 2-phosphoglycerate (2-PG) into phosphoenolpyruvate (PEP). It is essential for the degradation of carbohydrates via glycolysis. In Anaeromyxobacter dehalogenans (strain 2CP-C), this protein is Enolase.